Reading from the N-terminus, the 84-residue chain is Large ribosomal subunit protein bL27 (84 aa).

The disordered stretch occupies residues 1-21; it reads MAHKKGGGSSKNGRDSQSKRL.

This sequence belongs to the bacterial ribosomal protein bL27 family.

The sequence is that of Large ribosomal subunit protein bL27 from Brachyspira hyodysenteriae (strain ATCC 49526 / WA1).